Consider the following 194-residue polypeptide: MRYPESLLKLTRALSRLPGIGPKTAQRLALHLAFHKEEAEALAEALEGIKRVRACRECGNLAEGELCPICQDEDRDRSLLAVVESVADLYALERSGEFRGLYHVLGGALNPLEGIGPKELNLEGLFRRLEGVEEVVLATSMTVEGEATALYLAEELKKRGVRVTRPAYGLPVGGSLEYADEVTLGRALEGRRPV.

The C4-type zinc finger occupies cysteine 55 to cysteine 70. The 94-residue stretch at serine 78–proline 171 folds into the Toprim domain.

This sequence belongs to the RecR family.

Functionally, may play a role in DNA repair. It seems to be involved in an RecBC-independent recombinational process of DNA repair. It may act with RecF and RecO. The sequence is that of Recombination protein RecR from Thermus thermophilus (strain ATCC 27634 / DSM 579 / HB8).